The chain runs to 342 residues: Isopentenyl-diphosphate delta-isomerase (342 aa).

11 to 12 (RK) contacts substrate. FMN contacts are provided by residues Ser-68, 69 to 71 (SMT), Ser-99, and Asn-128. 99–101 (SQR) contacts substrate. Gln-162 lines the substrate pocket. Position 163 (Glu-163) interacts with Mg(2+). Residues Lys-194, Ser-219, Thr-224, 275 to 277 (GVR), and 296 to 297 (AK) each bind FMN.

Belongs to the IPP isomerase type 2 family. As to quaternary structure, homooctamer. Dimer of tetramers. FMN is required as a cofactor. NADPH serves as cofactor. The cofactor is Mg(2+).

It localises to the cytoplasm. It catalyses the reaction isopentenyl diphosphate = dimethylallyl diphosphate. Functionally, involved in the biosynthesis of isoprenoids. Catalyzes the 1,3-allylic rearrangement of the homoallylic substrate isopentenyl (IPP) to its allylic isomer, dimethylallyl diphosphate (DMAPP). This Legionella pneumophila subsp. pneumophila (strain Philadelphia 1 / ATCC 33152 / DSM 7513) protein is Isopentenyl-diphosphate delta-isomerase.